Here is a 58-residue protein sequence, read N- to C-terminus: uncharacterized protein (58 aa).

This is an uncharacterized protein from Saccharomyces cerevisiae (strain ATCC 204508 / S288c) (Baker's yeast).